We begin with the raw amino-acid sequence, 237 residues long: Ubiquinone biosynthesis O-methyltransferase (237 aa).

S-adenosyl-L-methionine is bound by residues Arg-38, Gly-58, Asp-79, and Met-124.

Belongs to the methyltransferase superfamily. UbiG/COQ3 family.

It carries out the reaction a 3-demethylubiquinol + S-adenosyl-L-methionine = a ubiquinol + S-adenosyl-L-homocysteine + H(+). It catalyses the reaction a 3-(all-trans-polyprenyl)benzene-1,2-diol + S-adenosyl-L-methionine = a 2-methoxy-6-(all-trans-polyprenyl)phenol + S-adenosyl-L-homocysteine + H(+). It functions in the pathway cofactor biosynthesis; ubiquinone biosynthesis. Its function is as follows. O-methyltransferase that catalyzes the 2 O-methylation steps in the ubiquinone biosynthetic pathway. The chain is Ubiquinone biosynthesis O-methyltransferase from Acinetobacter baumannii (strain ACICU).